Reading from the N-terminus, the 467-residue chain is ATP synthase subunit beta (467 aa).

150–157 lines the ATP pocket; the sequence is GGAGVGKT.

This sequence belongs to the ATPase alpha/beta chains family. F-type ATPases have 2 components, CF(1) - the catalytic core - and CF(0) - the membrane proton channel. CF(1) has five subunits: alpha(3), beta(3), gamma(1), delta(1), epsilon(1). CF(0) has three main subunits: a(1), b(2) and c(9-12). The alpha and beta chains form an alternating ring which encloses part of the gamma chain. CF(1) is attached to CF(0) by a central stalk formed by the gamma and epsilon chains, while a peripheral stalk is formed by the delta and b chains.

It localises to the cell inner membrane. It carries out the reaction ATP + H2O + 4 H(+)(in) = ADP + phosphate + 5 H(+)(out). Its function is as follows. Produces ATP from ADP in the presence of a proton gradient across the membrane. The catalytic sites are hosted primarily by the beta subunits. This chain is ATP synthase subunit beta, found in Polaromonas sp. (strain JS666 / ATCC BAA-500).